Reading from the N-terminus, the 218-residue chain is Eukaryotic translation initiation factor 4E-1 (218 aa).

A compositionally biased stretch (basic and acidic residues) spans 1–11; that stretch reads MQTEQPPKESQ. 2 disordered regions span residues 1–20 and 198–218; these read MQTEQPPKESQTENTVSEPQ and FSAHEDSSKSGSTRAKTRMSV. Residues 206–218 show a composition bias toward polar residues; it reads KSGSTRAKTRMSV.

Belongs to the eukaryotic initiation factor 4E family. EIF4F is a multi-subunit complex, the composition of which varies with external and internal environmental conditions. It is composed of at least eIF4A, eIF4E and eIF4G. eIF4E is also known to interact with other partners.

In terms of biological role, recognizes and binds the 7-methylguanosine-containing mRNA cap during an early step in the initiation of protein synthesis and facilitates ribosome binding by inducing the unwinding of the mRNAs secondary structures. The protein is Eukaryotic translation initiation factor 4E-1 (tif451) of Schizosaccharomyces pombe (strain 972 / ATCC 24843) (Fission yeast).